We begin with the raw amino-acid sequence, 173 residues long: MANITVFYNEDFQGKQVDLPPGNYTRAQLAALGIENNTISSVKVPPGVKAILYQNDGFAGDQIEVVANAEELGPLNNNVSSIRVISVPVQPRARFFYKEQFDGKEVDLPPGQYTQAELERYGIDNNTISSVKPQGLAVVLFKNDNFSGDTLPVNSDAPTLGAMNNNTSSIRIS.

Beta/gamma crystallin 'Greek key' domains lie at 2–46 and 48–86; these read ANIT…KVPP and VKAI…RVIS. Positions 8, 37, 38, 40, 54, 77, 78, and 80 each coordinate Ca(2+). Positions 87-90 are connecting peptide; it reads VPVQ. 2 consecutive Beta/gamma crystallin 'Greek key' domains span residues 91 to 135 and 136 to 173; these read PRAR…KPQG and LAVV…IRIS.

The protein belongs to the beta/gamma-crystallin family.

Its function is as follows. Protein S, induced in large amounts during fruiting body formation, assembles on the surface of myxospores in the presence of calcium ions. The chain is Development-specific protein S (tps) from Myxococcus xanthus.